A 299-amino-acid polypeptide reads, in one-letter code: Formin-like protein 12 (299 aa).

Residues 1-295 (MASNCEKMLS…LEKRKMNIKQ (295 aa)) form the FH2 domain.

It belongs to the formin-like family. Class-II subfamily.

This chain is Formin-like protein 12 (FH12), found in Arabidopsis thaliana (Mouse-ear cress).